Consider the following 216-residue polypeptide: Large ribosomal subunit protein uL4 (216 aa).

The interval 47–77 (THKVKGMGEVSGTTKKPYRQKGTGNARQGSL) is disordered.

This sequence belongs to the universal ribosomal protein uL4 family. In terms of assembly, part of the 50S ribosomal subunit.

In terms of biological role, one of the primary rRNA binding proteins, this protein initially binds near the 5'-end of the 23S rRNA. It is important during the early stages of 50S assembly. It makes multiple contacts with different domains of the 23S rRNA in the assembled 50S subunit and ribosome. Its function is as follows. Forms part of the polypeptide exit tunnel. The chain is Large ribosomal subunit protein uL4 from Acidiphilium cryptum (strain JF-5).